The sequence spans 887 residues: 3-hydroxy-3-methylglutaryl-coenzyme A reductase (887 aa).

Topologically, residues 1–9 are cytoplasmic; it reads MLSRLFRMH. Residues 10 to 39 form a helical membrane-spanning segment; sequence GLFVASHPWEVIVGTVTLTICMMSMNMFTG. Over 40–56 the chain is Lumenal; that stretch reads NNKICGWNYECPKFEED. The chain crosses the membrane as a helical span at residues 57-78; the sequence is VLSSDIIILTITRCIAILYIYF. An SSD domain is found at 61-218; the sequence is DIIILTITRC…MTFFPACVSL (158 aa). An INSIG-binding motif motif is present at residues 75–78; that stretch reads YIYF. The Cytoplasmic portion of the chain corresponds to 79–89; sequence QFQNLRQLGSK. Lys-89 is covalently cross-linked (Glycyl lysine isopeptide (Lys-Gly) (interchain with G-Cter in ubiquitin)). A helical transmembrane segment spans residues 90 to 114; it reads YILGIAGLFTIFSSFVFSTVVIHFL. The Lumenal segment spans residues 115-123; it reads DKELTGLNE. The helical transmembrane segment at 124 to 149 threads the bilayer; the sequence is ALPFFLLLIDLSRASALAKFALSSNS. At 150-159 the chain is on the cytoplasmic side; the sequence is QDEVRENIAR. The chain crosses the membrane as a helical span at residues 160 to 187; it reads GMAILGPTFTLDALVECLVIGVGTMSGV. Over 188–191 the chain is Lumenal; that stretch reads RQLE. A helical transmembrane segment spans residues 192-220; it reads IMCCFGCMSVLANYFVFMTFFPACVSLVL. Residues 221 to 248 lie on the Cytoplasmic side of the membrane; sequence ELSRESREGRPIWQLSHFARVLEEEENK. Lys-248 is covalently cross-linked (Glycyl lysine isopeptide (Lys-Gly) (interchain with G-Cter in ubiquitin)). A helical membrane pass occupies residues 249–275; sequence PNPVTQRVKMIMSLGLVLVHAHSRWIA. The Lumenal segment spans residues 276–314; sequence DPSPQNSTAEQSKVSLGLAEDVSKRIEPSVSLWQFYLSK. Asn-281 is a glycosylation site (N-linked (GlcNAc...) asparagine). A helical membrane pass occupies residues 315-339; that stretch reads MISMDIEQVITLSLALLLAVKYIFF. Residues 340–887 are Cytoplasmic-facing; it reads EQAETESTLS…LQGTCTKKAA (548 aa). Residues Glu-558, Lys-690, and Asp-766 each act as charge relay system in the active site. His-865 (proton donor) is an active-site residue. Ser-871 is modified (phosphoserine; by AMPK).

Belongs to the HMG-CoA reductase family. In terms of assembly, homotetramer. Homodimer. Interacts (via its SSD) with INSIG1; the interaction, accelerated by sterols, leads to the recruitment of HMGCR to AMFR/gp78 for its ubiquitination by the sterol-mediated ERAD pathway. Interacts with UBIAD1. In terms of processing, undergoes sterol-mediated ubiquitination and ER-associated degradation (ERAD). Accumulation of sterols in the endoplasmic reticulum (ER) membrane, triggers binding of the reductase to the ER membrane protein INSIG1 or INSIG2. The INSIG1 binding leads to the recruitment of the ubiquitin ligase, AMFR/gp78, RNF139 or RNF145, initiating ubiquitination of the reductase. The ubiquitinated reductase is then extracted from the ER membrane and delivered to cytosolic 26S proteosomes by a mechanism probably mediated by the ATPase Valosin-containing protein VCP/p97. The INSIG2-binding leads to the recruitment of the ubiquitin ligase RNF139, initiating ubiquitination of the reductase. Lys-248 is the main site of ubiquitination. Ubiquitination is enhanced by the presence of a geranylgeranylated protein. Post-translationally, N-glycosylated. Deglycosylated by NGLY1 on release from the endoplasmic reticulum (ER) in a sterol-mediated manner. Phosphorylated. Phosphorylation at Ser-871 reduces the catalytic activity.

The protein resides in the endoplasmic reticulum membrane. The protein localises to the peroxisome membrane. The enzyme catalyses (R)-mevalonate + 2 NADP(+) + CoA = (3S)-3-hydroxy-3-methylglutaryl-CoA + 2 NADPH + 2 H(+). It functions in the pathway metabolic intermediate biosynthesis; (R)-mevalonate biosynthesis; (R)-mevalonate from acetyl-CoA: step 3/3. Regulated by a negative feedback mechanism through sterols and non-sterol metabolites derived from mevalonate. Phosphorylation at Ser-871 down-regulates the catalytic activity. In terms of biological role, catalyzes the conversion of (3S)-hydroxy-3-methylglutaryl-CoA (HMG-CoA) to mevalonic acid, the rate-limiting step in the synthesis of cholesterol and other isoprenoids, thus plays a critical role in cellular cholesterol homeostasis. In Rattus norvegicus (Rat), this protein is 3-hydroxy-3-methylglutaryl-coenzyme A reductase (Hmgcr).